We begin with the raw amino-acid sequence, 204 residues long: High frequency lysogenization protein HflD homolog (204 aa).

This sequence belongs to the HflD family.

It is found in the cytoplasm. It localises to the cell inner membrane. This chain is High frequency lysogenization protein HflD homolog, found in Xanthomonas axonopodis pv. citri (strain 306).